The sequence spans 64 residues: Large ribosomal subunit protein bL35 (64 aa).

The protein belongs to the bacterial ribosomal protein bL35 family.

This is Large ribosomal subunit protein bL35 from Levilactobacillus brevis (strain ATCC 367 / BCRC 12310 / CIP 105137 / JCM 1170 / LMG 11437 / NCIMB 947 / NCTC 947) (Lactobacillus brevis).